The sequence spans 265 residues: Synaptoporin (265 aa).

The Cytoplasmic segment spans residues 1–4 (MCMV). An MARVEL domain is found at 1–202 (MCMVIFAPLF…NIWFVFKETG (202 aa)). A helical transmembrane segment spans residues 5–25 (IFAPLFAIFAFATCGGYSGGL). At 26–81 (RLSVDCVNKTESNLSIDIAFAYPFRLHQVTFEVPTCEGKERQKLALIGDSSSSAEF) the chain is on the vesicular side. Residues asparagine 33 and asparagine 38 are each glycosylated (N-linked (GlcNAc...) asparagine). The helical transmembrane segment at 82–102 (FVTVAVFAFLYSLAATVVYIF) threads the bilayer. The Cytoplasmic portion of the chain corresponds to 103-114 (FQNKYRENNRGP). A helical membrane pass occupies residues 115-135 (LIDFIVTVVFSFLWLVGSSAW). At 136–177 (AKGLSDVKVATDPKEVLLLMSACKQPSNKCMAIHSPVMSSLN) the chain is on the vesicular side. The helical transmembrane segment at 178 to 198 (TSVVFGFLNFILWAGNIWFVF) threads the bilayer. The Cytoplasmic portion of the chain corresponds to 199–265 (KETGWHSSGQ…TGPTSFTNQI (67 aa)). Tandem repeats lie at residues 210-214 (YLSDP), 222-226 (YNQGG), 227-231 (YNQDS), 232-236 (YGSSS), and 238-242 (YSQQA). Residues 210-242 (YLSDPMEKHSSSYNQGGYNQDSYGSSSGYSQQA) are 5 X approximate repeats. Serine 212 is modified (phosphoserine). The segment at 221-265 (SYNQGGYNQDSYGSSSGYSQQASLGPTSDEFGQQPTGPTSFTNQI) is disordered. A compositionally biased stretch (low complexity) spans 224–243 (QGGYNQDSYGSSSGYSQQAS). Positions 244–265 (LGPTSDEFGQQPTGPTSFTNQI) are enriched in polar residues.

It belongs to the synaptophysin/synaptobrevin family.

The protein resides in the cytoplasmic vesicle. It is found in the secretory vesicle. Its subcellular location is the synaptic vesicle membrane. The protein localises to the synapse. It localises to the synaptosome. Intrinsic membrane protein of small synaptic vesicles. Probable vesicular channel protein. In Homo sapiens (Human), this protein is Synaptoporin (SYNPR).